The primary structure comprises 373 residues: 3-isopropylmalate dehydrogenase gloI (373 aa).

Substrate contacts are provided by S92, R98, and R108. Positions 228, 253, and 257 each coordinate Mg(2+). Residues 294–300 (HGSAPDI) and N307 contribute to the NADP(+) site.

It belongs to the isocitrate and isopropylmalate dehydrogenases family. As to quaternary structure, homodimer. Mg(2+) is required as a cofactor. It depends on Mn(2+) as a cofactor.

The catalysed reaction is (2R,3S)-3-isopropylmalate + NAD(+) = 4-methyl-2-oxopentanoate + CO2 + NADH. Its pathway is mycotoxin biosynthesis. In terms of biological role, 3-isopropylmalate dehydrogenase; part of the gene cluster that mediates the biosynthesis of pneumocandins, lipohexapeptides of the echinocandin family that prevent fungal cell wall formation by non-competitive inhibition of beta-1,3-glucan synthase. The 10,12-dimethylmyristoyl side chain is synthesized by the reducing polyketide synthase gloL/GLPKS4. The thioesterase gloN/GLHYD exclusively interacts with gloL/GLPKS4 to maintain turnover of the polyketide side chain. The 10R,12S-dimethylmyristic acid is then transferred to the first thiolation domain of the nonribosomal peptide synthetase gloA/GLNRPS4 by the acyl-AMP ligase gloD/GLligase, followed by its acylation to L-ornithine to trigger elongation of the cyclic hexapeptide. L-ornithine, 4R-hydroxyl-L-proline (generated from L-proline by the dioxygenase gloF/GLOXY2), 3S-hydroxyl-L-homotyrosine (generated by gloG/GLHtyB, gloH/GLHtyA, gloI/GLHtyC, gloJ/GLHtyD and hydroxylated at C-3 by the dioxygenase gloM/GLOXY1), 3R-hydroxyl-L-glutamine (generated from L-glutamine probably by the dioxygenase gloE/GLOXY3) and 3S-hydroxyl-L-proline (generated from L-proline by the dioxygenase gloF/GLOXY2 to yield pneumocandin B0), or 3S-hydroxyl-4S-methyl-L-proline (generated from L-leucine by the dioxygenase gloC/GLOXY4 to yield pneumocandin A0) are sequentially added to the growing chain. The last C domain of gloA/GLNRPS4 is proposed to be responsible for cyclization by condensation to form the peptide bond between L-ornithine and 3S-hydroxyl-4S-methyl-L-proline (for pneumocandin A0) or 3S-hydroxyl-L-proline (for pneumocandin B0). Finally, the subsequent C-4 hydroxylation of 3S-hydroxyl-L-homotyrosine and L-ornithine dihydroxylation at C-4 and C-5 are performed by the cytochrome P450 monooxygenases gloP/GLP450-1 and gloO/GLP450-2, respectively. The sequence is that of 3-isopropylmalate dehydrogenase gloI from Glarea lozoyensis (strain ATCC 20868 / MF5171).